The sequence spans 313 residues: Formimidoylglutamase (313 aa).

Residues His-130, Asp-155, His-157, Asp-159, Asp-241, and Asp-243 each coordinate Mn(2+).

Belongs to the arginase family. It depends on Mn(2+) as a cofactor.

The catalysed reaction is N-formimidoyl-L-glutamate + H2O = formamide + L-glutamate. The protein operates within amino-acid degradation; L-histidine degradation into L-glutamate; L-glutamate from N-formimidoyl-L-glutamate (hydrolase route): step 1/1. Functionally, catalyzes the conversion of N-formimidoyl-L-glutamate to L-glutamate and formamide. This chain is Formimidoylglutamase, found in Salmonella arizonae (strain ATCC BAA-731 / CDC346-86 / RSK2980).